Consider the following 141-residue polypeptide: Galactose-6-phosphate isomerase subunit LacA (141 aa).

It belongs to the LacAB/RpiB family. As to quaternary structure, heteromultimeric protein consisting of LacA and LacB.

The enzyme catalyses aldehydo-D-galactose 6-phosphate = keto-D-tagatose 6-phosphate. It functions in the pathway carbohydrate metabolism; D-galactose 6-phosphate degradation; D-tagatose 6-phosphate from D-galactose 6-phosphate: step 1/1. The polypeptide is Galactose-6-phosphate isomerase subunit LacA (Streptococcus agalactiae serotype Ia (strain ATCC 27591 / A909 / CDC SS700)).